The sequence spans 485 residues: Cobyric acid synthase (485 aa).

In terms of domain architecture, GATase cobBQ-type spans 250 to 448 (TQTVAVIAYP…LHGMFEDPRV (199 aa)). The Nucleophile role is filled by C334. Residue H440 is part of the active site.

Belongs to the CobB/CobQ family. CobQ subfamily.

It participates in cofactor biosynthesis; adenosylcobalamin biosynthesis. Catalyzes amidations at positions B, D, E, and G on adenosylcobyrinic A,C-diamide. NH(2) groups are provided by glutamine, and one molecule of ATP is hydrogenolyzed for each amidation. This is Cobyric acid synthase from Polaromonas naphthalenivorans (strain CJ2).